Reading from the N-terminus, the 137-residue chain is Thionin-like protein 1 (137 aa).

An N-terminal signal peptide occupies residues 1 to 23; sequence MEDKRVAMLVVMMLVMGNMLIEA.

Belongs to the plant thionin (TC 1.C.44) family. Is disulfide-linked.

It is found in the secreted. May be involved in plant defense. The chain is Thionin-like protein 1 from Arabidopsis thaliana (Mouse-ear cress).